Reading from the N-terminus, the 501-residue chain is MGVFSNLRGPKIGLTHEELPVVANGSTSSSSSPSSFKRKVSTFLPICVALVVIIEIGFLCRLDNASLVDTLTHFFTKSSSDLKVGSGIEKCQEWLERVDSVTYSRDFTKDPIFISGSNKDFKSCSVDCVMGFTSDKKPDAAFGLSHQPGTLSIIRSMESAQYYQENNLAQARRKGYDIVMTTSLSSDVPVGYFSWAEYDIMAPVQPKTEKALAAAFISNCAARNFRLQALEALMKTNVKIDSYGGCHRNRDGSVEKVEALKHYKFSLAFENTNEEDYVTEKFFQSLVAGSVPVVVGAPNIEEFAPSPDSFLHIKQMDDVKAVAKKMKYLADNPDAYNQTLRWKHEGPSDSFKALIDMAAVHSSCRLCIFVATRIREQEEKSPEFKRRPCKCTRGSETVYHLYVRERGRFDMESIFLKDGNLTLEALESAVLAKFMSLRYEPIWKKERPASLRGDGKLRVHGIYPIGLTQRQALYNFKFEGNSSLSTHIQRNPCPKFEVVFV.

Over 1 to 39 the chain is Cytoplasmic; it reads MGVFSNLRGPKIGLTHEELPVVANGSTSSSSSPSSFKRK. A helical; Signal-anchor for type II membrane protein transmembrane segment spans residues 40 to 60; that stretch reads VSTFLPICVALVVIIEIGFLC. Residues 61 to 501 are Lumenal-facing; sequence RLDNASLVDT…PCPKFEVVFV (441 aa). 4 N-linked (GlcNAc...) asparagine glycosylation sites follow: Asn-64, Asn-337, Asn-420, and Asn-481.

This sequence belongs to the glycosyltransferase 10 family. Mg(2+) serves as cofactor. Mn(2+) is required as a cofactor. Post-translationally, glycosylation may be important for enzymatic activity.

The protein resides in the golgi apparatus. The protein localises to the golgi stack membrane. It catalyses the reaction N(4)-{beta-D-GlcNAc-(1-&gt;2)-alpha-D-Man-(1-&gt;3)-[beta-D-GlcNAc-(1-&gt;2)-alpha-D-Man-(1-&gt;6)]-beta-D-Man-(1-&gt;4)-beta-D-GlcNAc-(1-&gt;4)-beta-D-GlcNAc}-L-asparaginyl-[protein] + GDP-beta-L-fucose = N(4)-{beta-D-GlcNAc-(1-&gt;2)-alpha-D-Man-(1-&gt;3)-[beta-D-GlcNAc-(1-&gt;2)-alpha-D-Man-(1-&gt;6)]-beta-D-Man-(1-&gt;4)-beta-D-GlcNAc-(1-&gt;4)-[alpha-L-Fuc(1-&gt;3)]-beta-D-GlcNAc}-L-asparaginyl-[protein] + GDP + H(+). Its pathway is protein modification; protein glycosylation. Inhibited by Cu(2+) and Zn(2+). Functionally, involved in cell wall synthesis. Preferentially catalyzes the addition of fucose in alpha 1-3 linkage to the first GlcNAc residue next to the peptide chains in N-glycans. This is Glycoprotein 3-alpha-L-fucosyltransferase A (FUT11) from Arabidopsis thaliana (Mouse-ear cress).